The sequence spans 128 residues: MDKTFCVVVQNRIKEGYRRAGFSFHLGDNSLAAVSESQLAQLKADPRLVVQITETGSQEGGEGLSKEPAGSDEQKQLRADPPSTDLNTFTVEQLKAQLTERGITFKQSATKAELIALFAPADGEKSEA.

The segment at 53-87 is disordered; the sequence is TETGSQEGGEGLSKEPAGSDEQKQLRADPPSTDLN.

This sequence to phage Mu protein gp35. As to quaternary structure, monomer.

The chain is Mu-like prophage FluMu protein gp35 from Haemophilus influenzae (strain ATCC 51907 / DSM 11121 / KW20 / Rd).